The chain runs to 201 residues: MDKFTTLEGVAAPLKIINVDTDMIIPKQYLKTIKRTGLGKGLFSEQRYQDDGSENPDFILNKPAYRSAKILVAGDNFGCGSSREHAPWALLDFGIRCVISTSFGDIFYNNCFKNGVLPIRVSQDDLDKLFDDAERGSNATVTIDLPAQEIRGPDGGTVKFEIDPFRKHCLINGLDDIGLTLEKKASIDSYEDKLKTERAWA.

The protein belongs to the LeuD family. LeuD type 1 subfamily. As to quaternary structure, heterodimer of LeuC and LeuD.

The catalysed reaction is (2R,3S)-3-isopropylmalate = (2S)-2-isopropylmalate. The protein operates within amino-acid biosynthesis; L-leucine biosynthesis; L-leucine from 3-methyl-2-oxobutanoate: step 2/4. Functionally, catalyzes the isomerization between 2-isopropylmalate and 3-isopropylmalate, via the formation of 2-isopropylmaleate. This chain is 3-isopropylmalate dehydratase small subunit, found in Rhodopseudomonas palustris (strain HaA2).